Reading from the N-terminus, the 244-residue chain is Ureidoacrylate amidohydrolase RutB (244 aa).

The Proton acceptor role is filled by Asp38. Lys147 is a catalytic residue. Cys180 (nucleophile) is an active-site residue.

Belongs to the isochorismatase family. RutB subfamily.

The enzyme catalyses (Z)-3-ureidoacrylate + H2O + H(+) = (Z)-3-aminoacrylate + NH4(+) + CO2. The catalysed reaction is (Z)-3-ureidoacrylate + H2O = (Z)-3-aminoacrylate + carbamate + H(+). It carries out the reaction (Z)-2-methylureidoacrylate + H2O + H(+) = (Z)-2-methylaminoacrylate + NH4(+) + CO2. Functionally, hydrolyzes ureidoacrylate to form aminoacrylate and carbamate. The carbamate hydrolyzes spontaneously, thereby releasing one of the nitrogen atoms of the pyrimidine ring as ammonia and one of its carbon atoms as CO2. The chain is Ureidoacrylate amidohydrolase RutB from Escherichia coli O1:K1 / APEC.